The chain runs to 132 residues: ATP synthase epsilon chain, cyanelle (132 aa).

This sequence belongs to the ATPase epsilon chain family. In terms of assembly, F-type ATPases have 2 components, CF(1) - the catalytic core - and CF(0) - the membrane proton channel. CF(1) has five subunits: alpha(3), beta(3), gamma(1), delta(1), epsilon(1). CF(0) has three main subunits: a, b and c.

The protein resides in the plastid. Its subcellular location is the cyanelle thylakoid membrane. Its function is as follows. Produces ATP from ADP in the presence of a proton gradient across the membrane. The sequence is that of ATP synthase epsilon chain, cyanelle from Cyanophora paradoxa.